The primary structure comprises 196 residues: Adenylate kinase (196 aa).

9–17 (GIPGVGKST) lines the ATP pocket.

It belongs to the archaeal adenylate kinase family.

The protein resides in the cytoplasm. It carries out the reaction AMP + ATP = 2 ADP. The chain is Adenylate kinase from Pyrococcus furiosus (strain ATCC 43587 / DSM 3638 / JCM 8422 / Vc1).